A 479-amino-acid chain; its full sequence is mRNA export factor ICP27 homolog (479 aa).

Low complexity predominate over residues Met-1–Ser-15. Disordered stretches follow at residues Met-1–Val-77 and Lys-91–Trp-210. Positions Thr-35–Gly-44 are enriched in acidic residues. Positions Glu-132–Gly-142 are enriched in basic and acidic residues. Zn(2+) is bound by residues Cys-354, His-445, Cys-449, and Cys-454. The CHC2-type zinc-finger motif lies at Cys-354 to Cys-454.

Belongs to the HHV-1 ICP27 protein family. In terms of assembly, interacts with host XPO1 and with the XPO1 export pathway components small GTPase RAN and nucleoporin NUP214. Interacts with host SPEN, OTT1 and OTT3. Interacts with host SRSF1, SRSF3, SRSF7 and SRPK1. Interacts with host DHX9; this interaction may have an inhibitory effect on virion production. Interacts (via N-terminus) with host NXF1; this interaction plays a role in mRNA export. Phosphorylated by cellular protein kinase CK2.

The protein resides in the host nucleus. It localises to the host cytoplasm. Promotes the nuclear export of a subset of early and late viral mRNAs by interacting with mRNAs and cellular export proteins. Additionally may prevent the establishment of cellular antiviral state, by acting as an alternative splicing factor for cellular RNAs such as STAT1, resulting in a STAT1 mRNA incapable of producing the STAT1alpha isoform. The chain is mRNA export factor ICP27 homolog from Homo sapiens (Human).